Reading from the N-terminus, the 278-residue chain is HTH-type transcriptional activator RhaS (278 aa).

The HTH araC/xylS-type domain maps to 174-272 (NQLLAWLEDH…DWSPRDIRQG (99 aa)). 2 consecutive DNA-binding regions (H-T-H motif) follow at residues 191–212 (ESIA…KQQT) and 239–262 (VTDI…RREF).

Binds DNA as a dimer.

The protein localises to the cytoplasm. Activates expression of the rhaBAD and rhaT operons. The chain is HTH-type transcriptional activator RhaS from Citrobacter koseri (strain ATCC BAA-895 / CDC 4225-83 / SGSC4696).